Here is a 428-residue protein sequence, read N- to C-terminus: Enolase (428 aa).

Q163 is a (2R)-2-phosphoglycerate binding site. E205 (proton donor) is an active-site residue. Residues D242, E286, and D313 each coordinate Mg(2+). Residues K338, R367, S368, and K389 each contribute to the (2R)-2-phosphoglycerate site. The active-site Proton acceptor is K338.

It belongs to the enolase family. Mg(2+) serves as cofactor.

It is found in the cytoplasm. The protein localises to the secreted. The protein resides in the cell surface. The enzyme catalyses (2R)-2-phosphoglycerate = phosphoenolpyruvate + H2O. The protein operates within carbohydrate degradation; glycolysis; pyruvate from D-glyceraldehyde 3-phosphate: step 4/5. Its function is as follows. Catalyzes the reversible conversion of 2-phosphoglycerate (2-PG) into phosphoenolpyruvate (PEP). It is essential for the degradation of carbohydrates via glycolysis. In Acidovorax ebreus (strain TPSY) (Diaphorobacter sp. (strain TPSY)), this protein is Enolase.